A 148-amino-acid polypeptide reads, in one-letter code: Single-stranded DNA-binding protein 1-B, mitochondrial (148 aa).

A mitochondrion-targeting transit peptide spans 1 to 17 (MFHRPVLQVFRQFARCQ). The region spanning 30–142 (MNKVQLLGRV…IIADNIIFLT (113 aa)) is the SSB domain.

In terms of assembly, homotetramer.

It localises to the mitochondrion. It is found in the mitochondrion matrix. The protein resides in the mitochondrion nucleoid. Functionally, binds preferentially and cooperatively to pyrimidine rich single-stranded DNA (ss-DNA). Required to maintain the copy number of mitochondrial DNA (mtDNA) and plays crucial roles during mtDNA replication that stimulate activity of the DNA polymerase at the replication fork. May also function in mtDNA repair. The protein is Single-stranded DNA-binding protein 1-B, mitochondrial (ssbp1-b) of Xenopus laevis (African clawed frog).